The sequence spans 566 residues: Oxygen-dependent choline dehydrogenase (566 aa).

7-36 serves as a coordination point for FAD; it reads DYIICGAGSAGNVLATRLTEDPNVTVLLLE. The interval 185 to 204 is disordered; it reads EGFGPMDRTVTPKGRRASTA. The Proton acceptor role is filled by His474.

This sequence belongs to the GMC oxidoreductase family. Requires FAD as cofactor.

The enzyme catalyses choline + A = betaine aldehyde + AH2. It catalyses the reaction betaine aldehyde + NAD(+) + H2O = glycine betaine + NADH + 2 H(+). It functions in the pathway amine and polyamine biosynthesis; betaine biosynthesis via choline pathway; betaine aldehyde from choline (cytochrome c reductase route): step 1/1. Involved in the biosynthesis of the osmoprotectant glycine betaine. Catalyzes the oxidation of choline to betaine aldehyde and betaine aldehyde to glycine betaine at the same rate. This chain is Oxygen-dependent choline dehydrogenase, found in Burkholderia vietnamiensis (strain G4 / LMG 22486) (Burkholderia cepacia (strain R1808)).